A 524-amino-acid chain; its full sequence is Acetyl-CoA decarbonylase/synthase complex subunit beta (524 aa).

Residues cysteine 212, cysteine 215, cysteine 301, and cysteine 303 each coordinate [Ni-Fe-S] cluster. The segment at tryptophan 436–glutamine 466 is disordered. Residues valine 437–alanine 452 show a composition bias toward acidic residues. Residues alanine 453 to glutamine 466 show a composition bias toward low complexity.

Belongs to the CdhC family. As to quaternary structure, monomer. The ACDS complex is made up of alpha, epsilon, beta, gamma and delta chains with a probable stoichiometry of (alpha(2)epsilon(2))(4)-beta(8)-(gamma(1)delta(1))(8). [Ni-Fe-S] cluster serves as cofactor.

The catalysed reaction is Co(I)-[corrinoid Fe-S protein] + acetyl-CoA + H(+) = methyl-Co(III)-[corrinoid Fe-S protein] + CO + CoA. Functionally, part of a complex that catalyzes the reversible cleavage of acetyl-CoA, allowing autotrophic growth from CO(2). The alpha-epsilon complex generates CO from CO(2), while the beta subunit (this protein) combines the CO with CoA and a methyl group to form acetyl-CoA. The methyl group, which is incorporated into acetyl-CoA, is transferred to the beta subunit by a corrinoid iron-sulfur protein (the gamma-delta complex). This is Acetyl-CoA decarbonylase/synthase complex subunit beta from Archaeoglobus fulgidus (strain ATCC 49558 / DSM 4304 / JCM 9628 / NBRC 100126 / VC-16).